The primary structure comprises 414 residues: Putative competence-damage inducible protein (414 aa).

It belongs to the CinA family.

The polypeptide is Putative competence-damage inducible protein (Limosilactobacillus fermentum (strain NBRC 3956 / LMG 18251) (Lactobacillus fermentum)).